The sequence spans 376 residues: MSKRDYYEVLGVGRDTSEREIKKAYKRLAMKFHPDRNPGDKEAEANFKEVKEAYEILTDSDKKAAYDQFGHAGVDPNRGGGGYGGSADFGDVFGDVFGDIFGGGRRGGQRQAARGSDLRYNLELSLEEAVRGLTKELRIPTLAACDSCDGSGAKKGSSPTTCGTCHGQGQVQMRQGFFAVQQACPTCHGRGKIIKDPCNKCHGEGRVEKSKTLSVKIPAGVDTGDRIRLSGEGEAGEYGAPPGDLYVQVSVREHAIFQRDGNNLYCEVPISFSKAALGGEIEVPTLDGKVNLKIPAETQTGRMFRMRGKGVKSVRSHAVGDLLCKVVMETPVNLNERQKELLREFEDTLTGQSKKHSPKAEGFFDGVKKFFQDLNS.

The J domain occupies 5–70 (DYYEVLGVGR…DKKAAYDQFG (66 aa)). Residues 132–210 (GLTKELRIPT…CHGEGRVEKS (79 aa)) form a CR-type zinc finger. The Zn(2+) site is built by C145, C148, C162, C165, C184, C187, C198, and C201. CXXCXGXG motif repeat units lie at residues 145–152 (CDSCDGSG), 162–169 (CGTCHGQG), 184–191 (CPTCHGRG), and 198–205 (CNKCHGEG).

It belongs to the DnaJ family. As to quaternary structure, homodimer. The cofactor is Zn(2+).

The protein resides in the cytoplasm. Its function is as follows. Participates actively in the response to hyperosmotic and heat shock by preventing the aggregation of stress-denatured proteins and by disaggregating proteins, also in an autonomous, DnaK-independent fashion. Unfolded proteins bind initially to DnaJ; upon interaction with the DnaJ-bound protein, DnaK hydrolyzes its bound ATP, resulting in the formation of a stable complex. GrpE releases ADP from DnaK; ATP binding to DnaK triggers the release of the substrate protein, thus completing the reaction cycle. Several rounds of ATP-dependent interactions between DnaJ, DnaK and GrpE are required for fully efficient folding. Also involved, together with DnaK and GrpE, in the DNA replication of plasmids through activation of initiation proteins. This is Chaperone protein DnaJ from Shewanella pealeana (strain ATCC 700345 / ANG-SQ1).